We begin with the raw amino-acid sequence, 273 residues long: MRQVAIYGKGGIGKSTTTQNLTAGLAERGNKIMVVGCDPKADSTRLLLGGLAQKSVLDTLREEGEDVELDSILKEGFGGIRCVESGGPEPGVGCAGRGIITSINMLEQLGAYTDDLDYVFYDVLGDVVCGGFAMPIREGKAQEIYIVASGEMMALYAANNISKGIQKYAKSGGVRLGGIICNSRKVANEYELLDAFAKELGSQLIHFVPRSPMVTKAEINKKTVIDFDPKSEQADEYRELARKIDENELFVIPKPMTQERLEEILVQYGLNDL.

8–15 (GKGGIGKS) lines the ATP pocket. C94 serves as a coordination point for [4Fe-4S] cluster. An ADP-ribosylarginine; by dinitrogenase reductase ADP-ribosyltransferase modification is found at R97. C129 is a binding site for [4Fe-4S] cluster.

It belongs to the NifH/BchL/ChlL family. As to quaternary structure, homodimer. [4Fe-4S] cluster serves as cofactor. In terms of processing, the reversible ADP-ribosylation of Arg-97 inactivates the nitrogenase reductase and regulates nitrogenase activity.

It carries out the reaction N2 + 8 reduced [2Fe-2S]-[ferredoxin] + 16 ATP + 16 H2O = H2 + 8 oxidized [2Fe-2S]-[ferredoxin] + 2 NH4(+) + 16 ADP + 16 phosphate + 6 H(+). Functionally, the key enzymatic reactions in nitrogen fixation are catalyzed by the nitrogenase complex, which has 2 components: the iron protein and the molybdenum-iron protein. This chain is Nitrogenase iron protein 4 (nifH4), found in Clostridium pasteurianum.